The primary structure comprises 424 residues: F-box protein At2g38590 (424 aa).

The region spanning 2–47 (TTMISNLPRVLIEEIFFRVPLKSLRAVRLTCKSWNTLSKSRSFRKL) is the F-box domain.

The protein is F-box protein At2g38590 of Arabidopsis thaliana (Mouse-ear cress).